The sequence spans 194 residues: Cathelicidin-related peptide isoform 3 (194 aa).

A signal peptide spans 1-22; the sequence is MQGFFWKTWLVLAVCGTPASLA. Residues 23–164 constitute a propeptide that is removed on maturation; it reads HRPLSYGEAL…DQPKRVKRFK (142 aa). Cystine bridges form between cysteine 79–cysteine 90 and cysteine 101–cysteine 118. The span at 125-145 shows a compositional bias: acidic residues; the sequence is EEEEEEEEEEQKAEAENDEEV. Residues 125–156 form a disordered region; the sequence is EEEEEEEEEEQKAEAENDEEVEKEKGDEEKDQ. The span at 146–156 shows a compositional bias: basic and acidic residues; it reads EKEKGDEEKDQ.

It belongs to the cathelicidin family. Expressed by the venom gland.

It localises to the secreted. The protein localises to the target cell membrane. Potent antimicrobial peptide against Gram-negative and Gram-positive bacteria. Adopts an amphipathic alpha helical conformation, that may allow to partition into the target membrane. Low hemolytic activities have been observed on mammalian cells. In Crotalus durissus cascavella (Northeastern Brazilian rattlesnake), this protein is Cathelicidin-related peptide isoform 3.